The following is a 467-amino-acid chain: ATP-dependent protease ATPase subunit HslU (467 aa).

ATP is bound by residues isoleucine 20, 62-67, aspartate 280, glutamate 345, and arginine 417; that span reads GVGKTE.

Belongs to the ClpX chaperone family. HslU subfamily. A double ring-shaped homohexamer of HslV is capped on each side by a ring-shaped HslU homohexamer. The assembly of the HslU/HslV complex is dependent on binding of ATP.

It localises to the cytoplasm. In terms of biological role, ATPase subunit of a proteasome-like degradation complex; this subunit has chaperone activity. The binding of ATP and its subsequent hydrolysis by HslU are essential for unfolding of protein substrates subsequently hydrolyzed by HslV. HslU recognizes the N-terminal part of its protein substrates and unfolds these before they are guided to HslV for hydrolysis. The chain is ATP-dependent protease ATPase subunit HslU from Ligilactobacillus salivarius (strain UCC118) (Lactobacillus salivarius).